Here is a 65-residue protein sequence, read N- to C-terminus: Small ribosomal subunit protein bS21A (65 aa).

This sequence belongs to the bacterial ribosomal protein bS21 family.

This chain is Small ribosomal subunit protein bS21A, found in Francisella tularensis subsp. holarctica (strain LVS).